Consider the following 414-residue polypeptide: Serine hydroxymethyltransferase (414 aa).

(6S)-5,6,7,8-tetrahydrofolate is bound by residues L118 and G122–L124. Position 227 is an N6-(pyridoxal phosphate)lysine (K227). (6S)-5,6,7,8-tetrahydrofolate contacts are provided by residues E240 and S350–F352.

This sequence belongs to the SHMT family. Homodimer. It depends on pyridoxal 5'-phosphate as a cofactor.

Its subcellular location is the cytoplasm. It carries out the reaction (6R)-5,10-methylene-5,6,7,8-tetrahydrofolate + glycine + H2O = (6S)-5,6,7,8-tetrahydrofolate + L-serine. It participates in one-carbon metabolism; tetrahydrofolate interconversion. The protein operates within amino-acid biosynthesis; glycine biosynthesis; glycine from L-serine: step 1/1. Functionally, catalyzes the reversible interconversion of serine and glycine with tetrahydrofolate (THF) serving as the one-carbon carrier. This reaction serves as the major source of one-carbon groups required for the biosynthesis of purines, thymidylate, methionine, and other important biomolecules. Also exhibits THF-independent aldolase activity toward beta-hydroxyamino acids, producing glycine and aldehydes, via a retro-aldol mechanism. In Bacillus cereus (strain ZK / E33L), this protein is Serine hydroxymethyltransferase.